Reading from the N-terminus, the 165-residue chain is Histone H1 (165 aa).

Residues 1–165 (GKQSTSKSVT…KKATKGSKKN (165 aa)) form a disordered region. The segment covering 9–18 (VTREKKDVKK) has biased composition (basic and acidic residues). A compositionally biased stretch (basic residues) spans 20–31 (VAPKKAIKKVTK). A compositionally biased stretch (low complexity) spans 32–41 (KSTTPVKTSK). 2 positions are modified to phosphothreonine: Thr48 and Thr54. A compositionally biased stretch (basic and acidic residues) spans 68–89 (TMKESVSDAKKTVHKSAGDKKL). Position 83 is a phosphoserine (Ser83). The span at 103-117 (KIVHPAKKAAAKPKT) shows a compositional bias: basic residues. Residue Thr117 is modified to Phosphothreonine. Over residues 118–157 (AKKEVKKDTKPVKKDAKKDTKPVKKDAKKDTKPAKKDTKK) the composition is skewed to basic and acidic residues.

Post-translationally, cell-growth/division-associated phosphorylation by a CDC2-like kinase. Is additionally phosphorylated on either Ser-33, Thr-34 or Thr-35, and on either Thr-39 or Ser-40.

Its subcellular location is the nucleus. It is found in the chromosome. Its function is as follows. Histones H1 are necessary for the condensation of nucleosome chains into higher-order structures. This chain is Histone H1 (HHO), found in Tetrahymena pyriformis.